The chain runs to 162 residues: SsrA-binding protein (162 aa).

This sequence belongs to the SmpB family.

The protein resides in the cytoplasm. Its function is as follows. Required for rescue of stalled ribosomes mediated by trans-translation. Binds to transfer-messenger RNA (tmRNA), required for stable association of tmRNA with ribosomes. tmRNA and SmpB together mimic tRNA shape, replacing the anticodon stem-loop with SmpB. tmRNA is encoded by the ssrA gene; the 2 termini fold to resemble tRNA(Ala) and it encodes a 'tag peptide', a short internal open reading frame. During trans-translation Ala-aminoacylated tmRNA acts like a tRNA, entering the A-site of stalled ribosomes, displacing the stalled mRNA. The ribosome then switches to translate the ORF on the tmRNA; the nascent peptide is terminated with the 'tag peptide' encoded by the tmRNA and targeted for degradation. The ribosome is freed to recommence translation, which seems to be the essential function of trans-translation. The protein is SsrA-binding protein of Colwellia psychrerythraea (strain 34H / ATCC BAA-681) (Vibrio psychroerythus).